The primary structure comprises 219 residues: Protein RhiB (219 aa).

Positions 174-195 are enriched in polar residues; that stretch reads AGISQQGNAAGTSISSKSTGSP. The segment at 174–201 is disordered; that stretch reads AGISQQGNAAGTSISSKSTGSPENPART.

Its function is as follows. May be involved in plant-microbe interaction. In Rhizobium leguminosarum bv. viciae, this protein is Protein RhiB (rhiB).